We begin with the raw amino-acid sequence, 431 residues long: 4-hydroxy-3-methylbut-2-en-1-yl diphosphate synthase (flavodoxin) (431 aa).

Residues Cys-310, Cys-313, Cys-356, and Glu-363 each contribute to the [4Fe-4S] cluster site.

Belongs to the IspG family. It depends on [4Fe-4S] cluster as a cofactor.

The catalysed reaction is (2E)-4-hydroxy-3-methylbut-2-enyl diphosphate + oxidized [flavodoxin] + H2O + 2 H(+) = 2-C-methyl-D-erythritol 2,4-cyclic diphosphate + reduced [flavodoxin]. It participates in isoprenoid biosynthesis; isopentenyl diphosphate biosynthesis via DXP pathway; isopentenyl diphosphate from 1-deoxy-D-xylulose 5-phosphate: step 5/6. Its function is as follows. Converts 2C-methyl-D-erythritol 2,4-cyclodiphosphate (ME-2,4cPP) into 1-hydroxy-2-methyl-2-(E)-butenyl 4-diphosphate. In Rhodopseudomonas palustris (strain HaA2), this protein is 4-hydroxy-3-methylbut-2-en-1-yl diphosphate synthase (flavodoxin).